We begin with the raw amino-acid sequence, 204 residues long: Elongation factor Ts (204 aa).

The interval 80-83 (TDFV) is involved in Mg(2+) ion dislocation from EF-Tu.

It belongs to the EF-Ts family.

The protein localises to the cytoplasm. Associates with the EF-Tu.GDP complex and induces the exchange of GDP to GTP. It remains bound to the aminoacyl-tRNA.EF-Tu.GTP complex up to the GTP hydrolysis stage on the ribosome. The sequence is that of Elongation factor Ts from Caldicellulosiruptor bescii (strain ATCC BAA-1888 / DSM 6725 / KCTC 15123 / Z-1320) (Anaerocellum thermophilum).